Here is a 338-residue protein sequence, read N- to C-terminus: DNA-directed RNA polymerase subunit alpha (338 aa).

The tract at residues 1–226 is alpha N-terminal domain (alpha-NTD); sequence MLIAQRPTLT…ELFGLARELN (226 aa). Residues 243–338 form an alpha C-terminal domain (alpha-CTD) region; that stretch reads LAADLALPIE…DADYADEQYN (96 aa).

Belongs to the RNA polymerase alpha chain family. In terms of assembly, homodimer. The RNAP catalytic core consists of 2 alpha, 1 beta, 1 beta' and 1 omega subunit. When a sigma factor is associated with the core the holoenzyme is formed, which can initiate transcription.

It catalyses the reaction RNA(n) + a ribonucleoside 5'-triphosphate = RNA(n+1) + diphosphate. DNA-dependent RNA polymerase catalyzes the transcription of DNA into RNA using the four ribonucleoside triphosphates as substrates. In Beutenbergia cavernae (strain ATCC BAA-8 / DSM 12333 / CCUG 43141 / JCM 11478 / NBRC 16432 / NCIMB 13614 / HKI 0122), this protein is DNA-directed RNA polymerase subunit alpha.